A 108-amino-acid polypeptide reads, in one-letter code: Competence protein ComGC (108 aa).

Residues 1–13 (MKKMMTFLKKAKV) form the signal peptide. The interval 14-39 (KAFTLVEMLVVLLIISVLFLLFVPNL) is may be involved in polymerization of ComGC. Phenylalanine 16 carries the post-translational modification N-methylphenylalanine. Residues 16–36 (FTLVEMLVVLLIISVLFLLFV) traverse the membrane as a helical segment.

Belongs to the ComGC family. The transformation pili are flexible filaments, consisting mainly of the major pilin ComGC and smaller amounts of the minor pilins, including at least ComGD, ComGF and ComGG, and perhaps ComGE. Homodimer. Forms higher-order multimers. Interacts with ComGG; the interaction is probably direct. Post-translationally, undergoes proteolytic cleavage.

Its subcellular location is the cell membrane. It localises to the cell surface. The protein localises to the fimbrium. It is found in the secreted. In terms of biological role, major component of the type IV-like pilus (T4P) that plays a role in transformation. Transformation pili are dynamically extended and retracted, perhaps thereby promoting DNA uptake and transformation. Required for transformation. Required for DNA binding. The polypeptide is Competence protein ComGC (Streptococcus pneumoniae (strain ATCC BAA-255 / R6)).